We begin with the raw amino-acid sequence, 728 residues long: Phosphoribosylformylglycinamidine synthase subunit PurL (728 aa).

The active site involves His40. ATP contacts are provided by Tyr43 and Lys82. A Mg(2+)-binding site is contributed by Glu84. Residues 85–88 (SHNH) and Arg107 contribute to the substrate site. His86 acts as the Proton acceptor in catalysis. Asp108 provides a ligand contact to Mg(2+). Residue Gln231 participates in substrate binding. Asp259 lines the Mg(2+) pocket. 303 to 305 (ESQ) serves as a coordination point for substrate. Residues Asn483 and Gly520 each coordinate ATP. A Mg(2+)-binding site is contributed by Asn521. Ser523 contributes to the substrate binding site.

The protein belongs to the FGAMS family. As to quaternary structure, monomer. Part of the FGAM synthase complex composed of 1 PurL, 1 PurQ and 2 PurS subunits.

The protein localises to the cytoplasm. The catalysed reaction is N(2)-formyl-N(1)-(5-phospho-beta-D-ribosyl)glycinamide + L-glutamine + ATP + H2O = 2-formamido-N(1)-(5-O-phospho-beta-D-ribosyl)acetamidine + L-glutamate + ADP + phosphate + H(+). Its pathway is purine metabolism; IMP biosynthesis via de novo pathway; 5-amino-1-(5-phospho-D-ribosyl)imidazole from N(2)-formyl-N(1)-(5-phospho-D-ribosyl)glycinamide: step 1/2. Its function is as follows. Part of the phosphoribosylformylglycinamidine synthase complex involved in the purines biosynthetic pathway. Catalyzes the ATP-dependent conversion of formylglycinamide ribonucleotide (FGAR) and glutamine to yield formylglycinamidine ribonucleotide (FGAM) and glutamate. The FGAM synthase complex is composed of three subunits. PurQ produces an ammonia molecule by converting glutamine to glutamate. PurL transfers the ammonia molecule to FGAR to form FGAM in an ATP-dependent manner. PurS interacts with PurQ and PurL and is thought to assist in the transfer of the ammonia molecule from PurQ to PurL. The protein is Phosphoribosylformylglycinamidine synthase subunit PurL of Carboxydothermus hydrogenoformans (strain ATCC BAA-161 / DSM 6008 / Z-2901).